The sequence spans 1296 residues: DNA-directed RNA polymerase subunit beta' (1296 aa).

Zn(2+) is bound by residues Cys-60, Cys-62, Cys-75, and Cys-78. Basic and acidic residues predominate over residues 185–202 (EEEGGKAAEKRKLRDSAD). Residues 185–204 (EEEGGKAAEKRKLRDSADRQ) are disordered. Residues Asp-535, Asp-537, and Asp-539 each coordinate Mg(2+). Zn(2+)-binding residues include Cys-877, Cys-954, Cys-961, and Cys-964.

It belongs to the RNA polymerase beta' chain family. As to quaternary structure, the RNAP catalytic core consists of 2 alpha, 1 beta, 1 beta' and 1 omega subunit. When a sigma factor is associated with the core the holoenzyme is formed, which can initiate transcription. The cofactor is Mg(2+). Requires Zn(2+) as cofactor.

It catalyses the reaction RNA(n) + a ribonucleoside 5'-triphosphate = RNA(n+1) + diphosphate. In terms of biological role, DNA-dependent RNA polymerase catalyzes the transcription of DNA into RNA using the four ribonucleoside triphosphates as substrates. This chain is DNA-directed RNA polymerase subunit beta', found in Kocuria rhizophila (strain ATCC 9341 / DSM 348 / NBRC 103217 / DC2201).